The following is a 341-amino-acid chain: Small ribosomal subunit biogenesis GTPase RsgA (341 aa).

The region spanning 112–268 (RQQLIAANLD…LIDTPGMREL (157 aa)) is the CP-type G domain. Residues 157-160 (TKVD) and 210-218 (GSSGAGKST) each bind GTP. 4 residues coordinate Zn(2+): Cys-290, Cys-295, His-297, and Cys-303.

This sequence belongs to the TRAFAC class YlqF/YawG GTPase family. RsgA subfamily. As to quaternary structure, monomer. Associates with 30S ribosomal subunit, binds 16S rRNA. Requires Zn(2+) as cofactor.

The protein localises to the cytoplasm. Functionally, one of several proteins that assist in the late maturation steps of the functional core of the 30S ribosomal subunit. Helps release RbfA from mature subunits. May play a role in the assembly of ribosomal proteins into the subunit. Circularly permuted GTPase that catalyzes slow GTP hydrolysis, GTPase activity is stimulated by the 30S ribosomal subunit. The polypeptide is Small ribosomal subunit biogenesis GTPase RsgA (Xylella fastidiosa (strain Temecula1 / ATCC 700964)).